We begin with the raw amino-acid sequence, 448 residues long: uncharacterized protein (448 aa).

A helical membrane pass occupies residues 19-41 (LGLLVPFLLLLFSCTNTVGYGVL). Residues 105 to 181 (YSYATSVLDG…CFSHGLSLFD (77 aa)) enclose the SH3b domain.

The protein localises to the membrane. This is an uncharacterized protein from Treponema pallidum (strain Nichols).